Consider the following 337-residue polypeptide: Phosphatidylglycerophosphate phosphatase PTPMT1 (337 aa).

Residues 1–20 (MYIKELTETDEEKRERSVED) are disordered. Residues tyrosine 55 and aspartate 133 each coordinate substrate. The Tyrosine-protein phosphatase domain maps to 73 to 220 (WWDRVAEFIL…VVEYYHVKVL (148 aa)). Catalysis depends on cysteine 164, which acts as the Phosphocysteine intermediate. The Glucan phosphatase signature motif CXAGXGR signature appears at 164–170 (CKAGRGR). 165 to 170 (KAGRGR) is a substrate binding site.

The protein belongs to the protein-tyrosine phosphatase family. Non-receptor class dual specificity subfamily. As to expression, expressed in stems, roots, flowers, mature seeds and leaves.

The catalysed reaction is O-phospho-L-seryl-[protein] + H2O = L-seryl-[protein] + phosphate. It carries out the reaction O-phospho-L-threonyl-[protein] + H2O = L-threonyl-[protein] + phosphate. It catalyses the reaction O-phospho-L-tyrosyl-[protein] + H2O = L-tyrosyl-[protein] + phosphate. The enzyme catalyses a 1,2-diacyl-sn-glycero-3-phospho-(1'-sn-glycero-3'-phosphate) + H2O = a 1,2-diacyl-sn-glycero-3-phospho-(1'-sn-glycerol) + phosphate. It participates in phospholipid metabolism; phosphatidylglycerol biosynthesis; phosphatidylglycerol from CDP-diacylglycerol: step 2/2. Exhibits phosphatidylglycerophosphate phosphatase activity. Involved in root growth and columella cells organization. May possess protein phosphatase activity. This is Phosphatidylglycerophosphate phosphatase PTPMT1 from Arabidopsis thaliana (Mouse-ear cress).